The following is a 421-amino-acid chain: BEN domain-containing protein 5 (421 aa).

An N6-acetyllysine modification is found at Lys-133. A coiled-coil region spans residues Arg-180–Leu-243. Lys-258 participates in a covalent cross-link: Glycyl lysine isopeptide (Lys-Gly) (interchain with G-Cter in SUMO2). Positions Gly-302 to Cys-408 constitute a BEN domain.

Acts as a transcriptional repressor. This is BEN domain-containing protein 5 (Bend5) from Mus musculus (Mouse).